Here is a 242-residue protein sequence, read N- to C-terminus: Orotidine 5'-phosphate decarboxylase (242 aa).

Substrate contacts are provided by residues aspartate 16, lysine 37, 64–73 (DLKFHDIPNT), threonine 128, arginine 190, glutamine 199, glycine 219, and arginine 220. Residue lysine 66 is the Proton donor of the active site.

The protein belongs to the OMP decarboxylase family. Type 1 subfamily. As to quaternary structure, homodimer.

The enzyme catalyses orotidine 5'-phosphate + H(+) = UMP + CO2. The protein operates within pyrimidine metabolism; UMP biosynthesis via de novo pathway; UMP from orotate: step 2/2. Its function is as follows. Catalyzes the decarboxylation of orotidine 5'-monophosphate (OMP) to uridine 5'-monophosphate (UMP). The polypeptide is Orotidine 5'-phosphate decarboxylase (Prochlorococcus marinus (strain MIT 9312)).